The sequence spans 252 residues: Trans-aconitate 2-methyltransferase (252 aa).

It belongs to the methyltransferase superfamily. Tam family.

The protein resides in the cytoplasm. It carries out the reaction trans-aconitate + S-adenosyl-L-methionine = (E)-3-(methoxycarbonyl)pent-2-enedioate + S-adenosyl-L-homocysteine. Its function is as follows. Catalyzes the S-adenosylmethionine monomethyl esterification of trans-aconitate. This chain is Trans-aconitate 2-methyltransferase, found in Shigella flexneri.